A 339-amino-acid polypeptide reads, in one-letter code: Methionine import ATP-binding protein MetN 2 (339 aa).

One can recognise an ABC transporter domain in the interval 2-241 (ISFNNVSKVY…PKTKTTQNFV (240 aa)). 38 to 45 (GFSGAGKS) contacts ATP.

Belongs to the ABC transporter superfamily. Methionine importer (TC 3.A.1.24) family. In terms of assembly, the complex is composed of two ATP-binding proteins (MetN), two transmembrane proteins (MetI) and a solute-binding protein (MetQ).

The protein localises to the cell membrane. The catalysed reaction is L-methionine(out) + ATP + H2O = L-methionine(in) + ADP + phosphate + H(+). It catalyses the reaction D-methionine(out) + ATP + H2O = D-methionine(in) + ADP + phosphate + H(+). Its function is as follows. Part of the ABC transporter complex MetNIQ involved in methionine import. Responsible for energy coupling to the transport system. The sequence is that of Methionine import ATP-binding protein MetN 2 from Bacillus cereus (strain ATCC 10987 / NRS 248).